We begin with the raw amino-acid sequence, 1072 residues long: Carbamoyl phosphate synthase large chain (1072 aa).

The carboxyphosphate synthetic domain stretch occupies residues 1 to 401; the sequence is MPKRLDINTI…SLLKAVRSLE (401 aa). ATP is bound by residues R129, R169, G175, G176, K208, I210, E215, G241, V242, H243, Q284, and E298. Positions 133–327 constitute an ATP-grasp 1 domain; it reads RTLMQELNEP…IAKLAAKIAV (195 aa). Mg(2+)-binding residues include Q284, E298, and N300. Positions 284, 298, and 300 each coordinate Mn(2+). Residues 402-546 form an oligomerization domain region; it reads LGVYHLELEH…YSTYGDENES (145 aa). Residues 547–929 are carbamoyl phosphate synthetic domain; that stretch reads VRTDRKSVVV…ALYKGLVASG (383 aa). The ATP-grasp 2 domain occupies 671–861; sequence EAALTQLGIP…MANVATKVIL (191 aa). Residues R707, R746, E752, G777, V778, H779, S780, Q820, and E832 each coordinate ATP. Q820, E832, and N834 together coordinate Mg(2+). Mn(2+) is bound by residues Q820, E832, and N834. The MGS-like domain maps to 930 to 1072; the sequence is INIPTHGSVI…QTKRHEVVHA (143 aa). Positions 930–1072 are allosteric domain; that stretch reads INIPTHGSVI…QTKRHEVVHA (143 aa).

It belongs to the CarB family. In terms of assembly, composed of two chains; the small (or glutamine) chain promotes the hydrolysis of glutamine to ammonia, which is used by the large (or ammonia) chain to synthesize carbamoyl phosphate. Tetramer of heterodimers (alpha,beta)4. Mg(2+) is required as a cofactor. Mn(2+) serves as cofactor.

It catalyses the reaction hydrogencarbonate + L-glutamine + 2 ATP + H2O = carbamoyl phosphate + L-glutamate + 2 ADP + phosphate + 2 H(+). The enzyme catalyses hydrogencarbonate + NH4(+) + 2 ATP = carbamoyl phosphate + 2 ADP + phosphate + 2 H(+). Its pathway is amino-acid biosynthesis; L-arginine biosynthesis; carbamoyl phosphate from bicarbonate: step 1/1. It functions in the pathway pyrimidine metabolism; UMP biosynthesis via de novo pathway; (S)-dihydroorotate from bicarbonate: step 1/3. Its function is as follows. Large subunit of the glutamine-dependent carbamoyl phosphate synthetase (CPSase). CPSase catalyzes the formation of carbamoyl phosphate from the ammonia moiety of glutamine, carbonate, and phosphate donated by ATP, constituting the first step of 2 biosynthetic pathways, one leading to arginine and/or urea and the other to pyrimidine nucleotides. The large subunit (synthetase) binds the substrates ammonia (free or transferred from glutamine from the small subunit), hydrogencarbonate and ATP and carries out an ATP-coupled ligase reaction, activating hydrogencarbonate by forming carboxy phosphate which reacts with ammonia to form carbamoyl phosphate. This Bacillus cereus (strain G9842) protein is Carbamoyl phosphate synthase large chain.